Reading from the N-terminus, the 380-residue chain is Putative 8-amino-7-oxononanoate synthase (380 aa).

Residue Arg18 coordinates substrate. 106 to 107 contributes to the pyridoxal 5'-phosphate binding site; sequence GY. His131 lines the substrate pocket. Residues Ser179, 205 to 208, and 236 to 239 each bind pyridoxal 5'-phosphate; these read DEAH and TFGK. Residue Lys239 is modified to N6-(pyridoxal phosphate)lysine. Thr352 contributes to the substrate binding site.

The protein belongs to the class-II pyridoxal-phosphate-dependent aminotransferase family. BioF subfamily. In terms of assembly, homodimer. Pyridoxal 5'-phosphate is required as a cofactor.

It catalyses the reaction 6-carboxyhexanoyl-[ACP] + L-alanine + H(+) = (8S)-8-amino-7-oxononanoate + holo-[ACP] + CO2. It participates in cofactor biosynthesis; biotin biosynthesis. Functionally, catalyzes the decarboxylative condensation of pimeloyl-[acyl-carrier protein] and L-alanine to produce 8-amino-7-oxononanoate (AON), [acyl-carrier protein], and carbon dioxide. The polypeptide is Putative 8-amino-7-oxononanoate synthase (bioF) (Neisseria meningitidis serogroup C / serotype 2a (strain ATCC 700532 / DSM 15464 / FAM18)).